A 350-amino-acid polypeptide reads, in one-letter code: UDP-glucose 4-epimerase GEPI48 (350 aa).

An NAD(+)-binding site is contributed by 5-36; it reads TVLVTGGAGYIGSHTVLQLLLGGFKAVVVDNL. S130 contacts substrate. The Proton acceptor role is filled by Y154.

This sequence belongs to the NAD(P)-dependent epimerase/dehydratase family. Requires NAD(+) as cofactor.

The enzyme catalyses UDP-alpha-D-glucose = UDP-alpha-D-galactose. It participates in carbohydrate metabolism; galactose metabolism. In Cyamopsis tetragonoloba (Guar), this protein is UDP-glucose 4-epimerase GEPI48.